A 273-amino-acid chain; its full sequence is Putative pyruvate, phosphate dikinase regulatory protein (273 aa).

153 to 160 (GVSRTSKS) is a binding site for ADP.

The protein belongs to the pyruvate, phosphate/water dikinase regulatory protein family. PDRP subfamily.

It catalyses the reaction N(tele)-phospho-L-histidyl/L-threonyl-[pyruvate, phosphate dikinase] + ADP = N(tele)-phospho-L-histidyl/O-phospho-L-threonyl-[pyruvate, phosphate dikinase] + AMP + H(+). It carries out the reaction N(tele)-phospho-L-histidyl/O-phospho-L-threonyl-[pyruvate, phosphate dikinase] + phosphate + H(+) = N(tele)-phospho-L-histidyl/L-threonyl-[pyruvate, phosphate dikinase] + diphosphate. Its function is as follows. Bifunctional serine/threonine kinase and phosphorylase involved in the regulation of the pyruvate, phosphate dikinase (PPDK) by catalyzing its phosphorylation/dephosphorylation. The chain is Putative pyruvate, phosphate dikinase regulatory protein from Ehrlichia ruminantium (strain Welgevonden).